Here is a 507-residue protein sequence, read N- to C-terminus: ATP synthase subunit alpha, chloroplastic (507 aa).

Position 170 to 177 (170 to 177) interacts with ATP; that stretch reads GDRQTGKT.

It belongs to the ATPase alpha/beta chains family. As to quaternary structure, F-type ATPases have 2 components, CF(1) - the catalytic core - and CF(0) - the membrane proton channel. CF(1) has five subunits: alpha(3), beta(3), gamma(1), delta(1), epsilon(1). CF(0) has four main subunits: a, b, b' and c.

It localises to the plastid. Its subcellular location is the chloroplast thylakoid membrane. The catalysed reaction is ATP + H2O + 4 H(+)(in) = ADP + phosphate + 5 H(+)(out). Its function is as follows. Produces ATP from ADP in the presence of a proton gradient across the membrane. The alpha chain is a regulatory subunit. The protein is ATP synthase subunit alpha, chloroplastic of Nymphaea alba (White water-lily).